Here is a 167-residue protein sequence, read N- to C-terminus: Urease accessory protein UreE (167 aa).

The protein belongs to the UreE family.

The protein localises to the cytoplasm. Its function is as follows. Involved in urease metallocenter assembly. Binds nickel. Probably functions as a nickel donor during metallocenter assembly. This Pseudomonas aeruginosa (strain UCBPP-PA14) protein is Urease accessory protein UreE.